A 174-amino-acid chain; its full sequence is Nucleoside-triphosphatase THEP1 (174 aa).

ATP is bound by residues 8–15 (GIPGIGKS) and 99–106 (LIVIDEVG).

It belongs to the THEP1 NTPase family.

The enzyme catalyses a ribonucleoside 5'-triphosphate + H2O = a ribonucleoside 5'-diphosphate + phosphate + H(+). In terms of biological role, has nucleotide phosphatase activity towards ATP, GTP, CTP, TTP and UTP. May hydrolyze nucleoside diphosphates with lower efficiency. The protein is Nucleoside-triphosphatase THEP1 of Methanosarcina barkeri (strain Fusaro / DSM 804).